The chain runs to 130 residues: Histone H2A type 1-B/E (130 aa).

Residues 1 to 22 (MSGRGKQGGKARAKAKTRSSRA) are disordered. Ser2 is subject to N-acetylserine. A Phosphoserine; by RPS6KA5 modification is found at Ser2. Position 4 is a citrulline; alternate (Arg4). Residue Arg4 is modified to Symmetric dimethylarginine; by PRMT5; alternate. Residues Lys6 and Lys10 each carry the N6-(2-hydroxyisobutyryl)lysine; alternate modification. Position 6 is an N6-acetyllysine; alternate (Lys6). Basic residues predominate over residues 7–19 (QGGKARAKAKTRS). N6-(beta-hydroxybutyryl)lysine; alternate occurs at positions 10 and 14. Residue Lys10 is modified to N6-lactoyllysine; alternate. Lys10 is modified (N6-succinyllysine; alternate). Residue Lys14 forms a Glycyl lysine isopeptide (Lys-Gly) (interchain with G-Cter in ubiquitin); alternate linkage. Residue Lys16 forms a Glycyl lysine isopeptide (Lys-Gly) (interchain with G-Cter in ubiquitin) linkage. Lys37 carries the N6-(2-hydroxyisobutyryl)lysine; alternate modification. N6-(beta-hydroxybutyryl)lysine; alternate is present on Lys37. N6-crotonyllysine; alternate is present on Lys37. Residues Lys75 and Lys76 each carry the N6-(2-hydroxyisobutyryl)lysine modification. Lys96 is subject to N6-(2-hydroxyisobutyryl)lysine; alternate. An N6-(beta-hydroxybutyryl)lysine; alternate modification is found at Lys96. Lys96 carries the N6-succinyllysine; alternate modification. Position 96 is an N6-glutaryllysine; alternate (Lys96). At Gln105 the chain carries N5-methylglutamine. N6-(2-hydroxyisobutyryl)lysine; alternate is present on Lys119. Position 119 is an N6-(beta-hydroxybutyryl)lysine; alternate (Lys119). Lys119 and Lys120 each carry N6-crotonyllysine; alternate. 2 positions are modified to N6-glutaryllysine; alternate: Lys119 and Lys120. Residue Lys120 forms a Glycyl lysine isopeptide (Lys-Gly) (interchain with G-Cter in ubiquitin); alternate linkage. The residue at position 121 (Thr121) is a Phosphothreonine; by DCAF1. N6-crotonyllysine; alternate is present on Lys126. Lys126 carries the N6-glutaryllysine; alternate modification.

The protein belongs to the histone H2A family. In terms of assembly, the nucleosome is a histone octamer containing two molecules each of H2A, H2B, H3 and H4 assembled in one H3-H4 heterotetramer and two H2A-H2B heterodimers. The octamer wraps approximately 147 bp of DNA. Post-translationally, deiminated on Arg-4 in granulocytes upon calcium entry. Monoubiquitination of Lys-120 (H2AK119Ub) by RING1, TRIM37 and RNF2/RING2 complex gives a specific tag for epigenetic transcriptional repression and participates in X chromosome inactivation of female mammals. It is involved in the initiation of both imprinted and random X inactivation. Ubiquitinated H2A is enriched in inactive X chromosome chromatin. Ubiquitination of H2A functions downstream of methylation of 'Lys-27' of histone H3 (H3K27me). H2AK119Ub by RNF2/RING2 can also be induced by ultraviolet and may be involved in DNA repair. Monoubiquitination of Lys-120 (H2AK119Ub) by TRIM37 may promote transformation of cells in a number of breast cancers. Following DNA double-strand breaks (DSBs), it is ubiquitinated through 'Lys-63' linkage of ubiquitin moieties by the E2 ligase UBE2N and the E3 ligases RNF8 and RNF168, leading to the recruitment of repair proteins to sites of DNA damage. Ubiquitination at Lys-14 and Lys-16 (H2AK13Ub and H2AK15Ub, respectively) in response to DNA damage is initiated by RNF168 that mediates monoubiquitination at these 2 sites, and 'Lys-63'-linked ubiquitin are then conjugated to monoubiquitin; RNF8 is able to extend 'Lys-63'-linked ubiquitin chains in vitro. Deubiquitinated by USP51 at Lys-14 and Lys-16 (H2AK13Ub and H2AK15Ub, respectively) after damaged DNA is repaired. H2AK119Ub and ionizing radiation-induced 'Lys-63'-linked ubiquitination (H2AK13Ub and H2AK15Ub) are distinct events. In terms of processing, phosphorylation on Ser-2 (H2AS1ph) is enhanced during mitosis. Phosphorylation on Ser-2 by RPS6KA5/MSK1 directly represses transcription. Acetylation of H3 inhibits Ser-2 phosphorylation by RPS6KA5/MSK1. Phosphorylation at Thr-121 (H2AT120ph) by DCAF1 is present in the regulatory region of many tumor suppresor genes and down-regulates their transcription. Post-translationally, glutamine methylation at Gln-105 (H2AQ104me) by FBL is specifically dedicated to polymerase I. It is present at 35S ribosomal DNA locus and impairs binding of the FACT complex. Symmetric dimethylation on Arg-4 by the PRDM1/PRMT5 complex may play a crucial role in the germ-cell lineage. In terms of processing, crotonylation (Kcr) is specifically present in male germ cells and marks testis-specific genes in post-meiotic cells, including X-linked genes that escape sex chromosome inactivation in haploid cells. Crotonylation marks active promoters and enhancers and confers resistance to transcriptional repressors. It is also associated with post-meiotically activated genes on autosomes. Post-translationally, lactylated in macrophages by EP300/P300 by using lactoyl-CoA directly derived from endogenous or exogenous lactate, leading to stimulates gene transcription.

It localises to the nucleus. It is found in the chromosome. Its function is as follows. Core component of nucleosome. Nucleosomes wrap and compact DNA into chromatin, limiting DNA accessibility to the cellular machineries which require DNA as a template. Histones thereby play a central role in transcription regulation, DNA repair, DNA replication and chromosomal stability. DNA accessibility is regulated via a complex set of post-translational modifications of histones, also called histone code, and nucleosome remodeling. In Homo sapiens (Human), this protein is Histone H2A type 1-B/E.